The sequence spans 379 residues: Homoserine O-acetyltransferase (379 aa).

Residues 52–356 form the AB hydrolase-1 domain; it reads NVVMVLHALT…IRGHDGFLVE (305 aa). Ser157 functions as the Nucleophile in the catalytic mechanism. Arg227 lines the substrate pocket. Residues Asp320 and His350 contribute to the active site. Asp351 provides a ligand contact to substrate.

It belongs to the AB hydrolase superfamily. MetX family. In terms of assembly, homodimer.

It localises to the cytoplasm. The enzyme catalyses L-homoserine + acetyl-CoA = O-acetyl-L-homoserine + CoA. It participates in amino-acid biosynthesis; L-methionine biosynthesis via de novo pathway; O-acetyl-L-homoserine from L-homoserine: step 1/1. Its function is as follows. Transfers an acetyl group from acetyl-CoA to L-homoserine, forming acetyl-L-homoserine. The protein is Homoserine O-acetyltransferase of Mycobacterium ulcerans (strain Agy99).